A 537-amino-acid chain; its full sequence is DELLA protein GAI (537 aa).

The disordered stretch occupies residues 1–33 (MKRDHQEISGSGSNPAESSSIKGKLWEEDPDAG). The span at 9–20 (SGSGSNPAESSS) shows a compositional bias: low complexity. The DELLA motif signature appears at 37-41 (DELLA). Residues 131-157 (KSDPGLEITRKRAKTESSSSSSSTTTR) form a disordered region. A compositionally biased stretch (low complexity) spans 147–156 (SSSSSSSTTT). A GRAS domain is found at 162–533 (IDSQEAGVRL…RPLIAHLGLA (372 aa)). The segment at 169–223 (VRLVHTLMACAEAVQQDNLKLADALVKHIGLLASSQTGAMRKVATYFAEALARRI) is leucine repeat I (LRI). A VHIID region spans residues 241 to 306 (QIPFYETCPY…GGPPAFRLTG (66 aa)). A VHIID motif is present at residues 272 to 276 (VHVID). Residues 320–352 (QVGWKLAQLAERIGIEFEFRGFVANSLADLEPE) form a leucine repeat II (LRII) region. Residues 364 to 454 (VAVNAVFELH…ELYLGRQICN (91 aa)) form a PFYRE region. The LXXLL motif signature appears at 372 to 376 (LHPLL). The interval 457 to 533 (ACEGMDRVER…RPLIAHLGLA (77 aa)) is SAW.

This sequence belongs to the GRAS family. DELLA subfamily. Post-translationally, phosphorylated. Ubiquitinated. Upon GA application it is ubiquitinated, leading to its subsequent degradation.

It is found in the nucleus. Its function is as follows. Probable transcriptional regulator that acts as a repressor of the gibberellin (GA) signaling pathway. Probably acts by participating in large multiprotein complexes that represses transcription of GA-inducible genes. Upon GA application, it is degraded by the proteasome, allowing the GA signaling pathway. The protein is DELLA protein GAI (GAI) of Gossypium hirsutum (Upland cotton).